We begin with the raw amino-acid sequence, 425 residues long: 3-phosphoshikimate 1-carboxyvinyltransferase (425 aa).

3-phosphoshikimate is bound by residues lysine 22, serine 23, and arginine 27. Lysine 22 is a phosphoenolpyruvate binding site. Phosphoenolpyruvate is bound by residues glycine 95 and arginine 123. Serine 169, serine 170, glutamine 171, serine 197, aspartate 313, asparagine 336, and lysine 340 together coordinate 3-phosphoshikimate. Glutamine 171 lines the phosphoenolpyruvate pocket. Aspartate 313 acts as the Proton acceptor in catalysis. Phosphoenolpyruvate-binding residues include arginine 344, arginine 386, and lysine 411.

It belongs to the EPSP synthase family. As to quaternary structure, monomer.

It is found in the cytoplasm. The catalysed reaction is 3-phosphoshikimate + phosphoenolpyruvate = 5-O-(1-carboxyvinyl)-3-phosphoshikimate + phosphate. It participates in metabolic intermediate biosynthesis; chorismate biosynthesis; chorismate from D-erythrose 4-phosphate and phosphoenolpyruvate: step 6/7. Catalyzes the transfer of the enolpyruvyl moiety of phosphoenolpyruvate (PEP) to the 5-hydroxyl of shikimate-3-phosphate (S3P) to produce enolpyruvyl shikimate-3-phosphate and inorganic phosphate. The chain is 3-phosphoshikimate 1-carboxyvinyltransferase from Marinomonas sp. (strain MWYL1).